The sequence spans 201 residues: Histidine biosynthesis bifunctional protein HisIE (201 aa).

Residues 1–114 (MLTAQQIEKL…FAPAQTEWGF (114 aa)) are phosphoribosyl-AMP cyclohydrolase. The tract at residues 115–201 (LYQLEKLLAS…SCVIRRLRER (87 aa)) is phosphoribosyl-ATP pyrophosphohydrolase.

This sequence in the N-terminal section; belongs to the PRA-CH family. In the C-terminal section; belongs to the PRA-PH family.

Its subcellular location is the cytoplasm. It catalyses the reaction 1-(5-phospho-beta-D-ribosyl)-ATP + H2O = 1-(5-phospho-beta-D-ribosyl)-5'-AMP + diphosphate + H(+). The enzyme catalyses 1-(5-phospho-beta-D-ribosyl)-5'-AMP + H2O = 1-(5-phospho-beta-D-ribosyl)-5-[(5-phospho-beta-D-ribosylamino)methylideneamino]imidazole-4-carboxamide. The protein operates within amino-acid biosynthesis; L-histidine biosynthesis; L-histidine from 5-phospho-alpha-D-ribose 1-diphosphate: step 2/9. It functions in the pathway amino-acid biosynthesis; L-histidine biosynthesis; L-histidine from 5-phospho-alpha-D-ribose 1-diphosphate: step 3/9. The chain is Histidine biosynthesis bifunctional protein HisIE from Photorhabdus laumondii subsp. laumondii (strain DSM 15139 / CIP 105565 / TT01) (Photorhabdus luminescens subsp. laumondii).